Here is a 482-residue protein sequence, read N- to C-terminus: Protein translocase subunit SecY (482 aa).

The segment at 1 to 22 (MVIKKPANKVDKKSTFKSSNKK) is disordered. The next 10 helical transmembrane spans lie at 41 to 61 (ILFT…TVPG), 92 to 112 (FSIL…VQLL), 137 to 157 (LTKI…IFTL), 177 to 197 (AFYY…MLWI), 201 to 221 (ITIK…IIIS), 243 to 263 (IFFS…LVIL), 303 to 323 (VIPV…SQII), 342 to 362 (FNTW…TFLY), 405 to 425 (VVGS…SKLT), and 426 to 446 (QLPS…SVAI).

The protein belongs to the SecY/SEC61-alpha family. Component of the Sec protein translocase complex. Heterotrimer consisting of SecY, SecE and SecG subunits. The heterotrimers can form oligomers, although 1 heterotrimer is thought to be able to translocate proteins. Interacts with the ribosome. Interacts with SecDF, and other proteins may be involved. Interacts with SecA.

The protein localises to the cell membrane. The central subunit of the protein translocation channel SecYEG. Consists of two halves formed by TMs 1-5 and 6-10. These two domains form a lateral gate at the front which open onto the bilayer between TMs 2 and 7, and are clamped together by SecE at the back. The channel is closed by both a pore ring composed of hydrophobic SecY resides and a short helix (helix 2A) on the extracellular side of the membrane which forms a plug. The plug probably moves laterally to allow the channel to open. The ring and the pore may move independently. This chain is Protein translocase subunit SecY, found in Mycoplasma capricolum subsp. capricolum (strain California kid / ATCC 27343 / NCTC 10154).